The chain runs to 303 residues: MIQQRTLKNTIRATGVGLHSGDKVYMTLRPAPVNHGIVFRRVDLDPVVEVPAKAELVTEVTLCTGLTCNDAKIQTVEHLMSALAGLGVDNIIVELSSAELPIMDGSAGPFVFLLQSAGIVEQDAPKRFIRVLKTVEVTEGDKVARFTPYEGYKLGFTIQFDHPMIPAKQSRQEIEFSTLAYTKEISRARTFGFMRDLEYMRERNLGLGGSMDNAIVLDEFRVLNEDGLRYADEFVRHKILDAIGDLYLAGGQVLGAYEGFKSGHALNNKLVRALMADATAWEWVSFDSPATPDPVEYATPAYA.

The Zn(2+) site is built by His-78, His-237, and Asp-241. His-264 acts as the Proton donor in catalysis.

It belongs to the LpxC family. The cofactor is Zn(2+).

The enzyme catalyses a UDP-3-O-[(3R)-3-hydroxyacyl]-N-acetyl-alpha-D-glucosamine + H2O = a UDP-3-O-[(3R)-3-hydroxyacyl]-alpha-D-glucosamine + acetate. It participates in glycolipid biosynthesis; lipid IV(A) biosynthesis; lipid IV(A) from (3R)-3-hydroxytetradecanoyl-[acyl-carrier-protein] and UDP-N-acetyl-alpha-D-glucosamine: step 2/6. Its function is as follows. Catalyzes the hydrolysis of UDP-3-O-myristoyl-N-acetylglucosamine to form UDP-3-O-myristoylglucosamine and acetate, the committed step in lipid A biosynthesis. This chain is UDP-3-O-acyl-N-acetylglucosamine deacetylase, found in Stenotrophomonas maltophilia (strain R551-3).